A 703-amino-acid chain; its full sequence is Calpain-8 (703 aa).

Residues 45 to 344 form the Calpain catalytic domain; sequence LFKDPEFPAC…FSRLEICNLS (300 aa). Active-site residues include cysteine 105, histidine 262, and asparagine 286. The interval 355 to 512 is domain III; sequence KWNLVLFNGR…VFSEKKAQAL (158 aa). A linker region spans residues 513–531; sequence EIGDAVPGDPHEPHPRDMD. EF-hand domains are found at residues 531–566, 575–610, 605–640, and 670–703; these read DGED…LLSK, FNIN…ICKY, LKIC…AGFT, and IRLE…RALV. Positions 532–703 are domain IV; the sequence is GEDEHFWSLS…LAEWLCRALV (172 aa). 9 residues coordinate Ca(2+): aspartate 588, aspartate 590, threonine 592, serine 594, glutamate 599, aspartate 618, serine 620, threonine 624, and glutamate 629.

Belongs to the peptidase C2 family. Monomer and homooligomer. Interacts with COPS1/GPS1, COPB1, EYA2, NME2, NME4 and TOMM70. It depends on Ca(2+) as a cofactor. Undergoes autolytic cleavage between Ala-5 and Ala-6 which gives rise to fragments extending from Ala-6 to the C-terminus, Ala-6 to the EF-hand 2 domain and from Ala-6 to the beginning of domain III. Predominantly expressed in the stomach. Localizes strictly to the surface mucus cells in the gastric epithelium and the mucus-secreting goblet cells in the duodenum.

Its subcellular location is the cytoplasm. It is found in the golgi apparatus. The catalysed reaction is Broad endopeptidase specificity.. The concentration of calcium for half-maximal activity is 0.3 mM. Inhibited by calpastatin and calpeptin. Calcium-regulated non-lysosomal thiol-protease. Involved in membrane trafficking in the gastric surface mucus cells (pit cells) and may involve the membrane trafficking of mucus cells via interactions with coat protein. Proteolytically cleaves the beta-subunit of coatomer complex. The protein is Calpain-8 (Capn8) of Mus musculus (Mouse).